The primary structure comprises 305 residues: Large ribosomal subunit protein uL10 (305 aa).

It belongs to the universal ribosomal protein uL10 family. As to quaternary structure, P0 forms a pentameric complex by interaction with dimers of P1 and P2. Post-translationally, phosphorylated.

In terms of biological role, ribosomal protein P0 is the functional equivalent of E.coli protein L10. The polypeptide is Large ribosomal subunit protein uL10 (rplp0) (Dictyostelium discoideum (Social amoeba)).